Here is a 161-residue protein sequence, read N- to C-terminus: Globin CTT-VIIB-6 (161 aa).

An N-terminal signal peptide occupies residues 1–16 (MKFFAVLALCIVGAIA). One can recognise a Globin domain in the interval 18–161 (PLTADEASLV…NTFAIVVPRL (144 aa)). Residues His-76 and His-111 each contribute to the heme b site.

This sequence belongs to the globin family. In terms of assembly, homodimer.

The sequence is that of Globin CTT-VIIB-6 (CTT-7B6) from Chironomus thummi thummi (Midge).